A 216-amino-acid chain; its full sequence is Adenylate kinase (216 aa).

An ATP-binding site is contributed by 10–15 (GAGKGT). Residues 30–59 (STGDMLRAAVGVGTEVGKRAKAVMDAGKLV) are NMP. AMP is bound by residues T31, R36, 57–59 (KLV), 85–88 (GFPR), and Q92. An LID region spans residues 126–163 (GRYTCAQCGTVYHDTDKVPVEEGVCDKCGSTHFKRRPD). ATP is bound at residue R127. C130 and C133 together coordinate Zn(2+). 136–137 (VY) is a binding site for ATP. 2 residues coordinate Zn(2+): C150 and C153. Residues R160 and R172 each contribute to the AMP site. A200 provides a ligand contact to ATP.

This sequence belongs to the adenylate kinase family. Monomer.

The protein resides in the cytoplasm. It catalyses the reaction AMP + ATP = 2 ADP. It functions in the pathway purine metabolism; AMP biosynthesis via salvage pathway; AMP from ADP: step 1/1. Functionally, catalyzes the reversible transfer of the terminal phosphate group between ATP and AMP. Plays an important role in cellular energy homeostasis and in adenine nucleotide metabolism. The protein is Adenylate kinase of Rhizobium etli (strain CIAT 652).